Consider the following 328-residue polypeptide: UDP-glucose 4-epimerase (328 aa).

Position 119 (Thr119) interacts with substrate. Catalysis depends on Tyr143, which acts as the Proton acceptor.

This sequence belongs to the NAD(P)-dependent epimerase/dehydratase family. The cofactor is NAD(+).

The catalysed reaction is UDP-alpha-D-glucose = UDP-alpha-D-galactose. The protein operates within carbohydrate metabolism; galactose metabolism. It functions in the pathway glycan metabolism; exopolysaccharide biosynthesis. The sequence is that of UDP-glucose 4-epimerase (exoB) from Rhizobium meliloti (strain 1021) (Ensifer meliloti).